The primary structure comprises 292 residues: Probable 2-(5''-triphosphoribosyl)-3'-dephosphocoenzyme-A synthase (292 aa).

It belongs to the CitG/MdcB family.

It carries out the reaction 3'-dephospho-CoA + ATP = 2'-(5''-triphospho-alpha-D-ribosyl)-3'-dephospho-CoA + adenine. The polypeptide is Probable 2-(5''-triphosphoribosyl)-3'-dephosphocoenzyme-A synthase (Shigella boydii serotype 18 (strain CDC 3083-94 / BS512)).